The sequence spans 89 residues: MAITQERKTQLISEFKTHESDTGSPEVQIAVLTESINNLNEHLRTHKKDHHSRRGLLKMVGRRRNLLTYLRNKDVTRYRELINKLGLRR.

The protein belongs to the universal ribosomal protein uS15 family. As to quaternary structure, part of the 30S ribosomal subunit. Forms a bridge to the 50S subunit in the 70S ribosome, contacting the 23S rRNA.

Its function is as follows. One of the primary rRNA binding proteins, it binds directly to 16S rRNA where it helps nucleate assembly of the platform of the 30S subunit by binding and bridging several RNA helices of the 16S rRNA. In terms of biological role, forms an intersubunit bridge (bridge B4) with the 23S rRNA of the 50S subunit in the ribosome. This is Small ribosomal subunit protein uS15 from Bacillus pumilus (strain SAFR-032).